The following is a 54-amino-acid chain: Photosystem II reaction center protein K (54 aa).

Residues 1 to 17 (MLLEHVTITLLNNTSFA) constitute a propeptide that is removed on maturation. Residues 29-49 (LIDVLPIIPLLFLLLAFVWQA) form a helical membrane-spanning segment.

The protein belongs to the PsbK family. PSII is composed of 1 copy each of membrane proteins PsbA, PsbB, PsbC, PsbD, PsbE, PsbF, PsbH, PsbI, PsbJ, PsbK, PsbL, PsbM, PsbT, PsbY, PsbZ, Psb30/Ycf12, at least 3 peripheral proteins of the oxygen-evolving complex and a large number of cofactors. It forms dimeric complexes.

Its subcellular location is the plastid. The protein localises to the chloroplast thylakoid membrane. Functionally, one of the components of the core complex of photosystem II (PSII). PSII is a light-driven water:plastoquinone oxidoreductase that uses light energy to abstract electrons from H(2)O, generating O(2) and a proton gradient subsequently used for ATP formation. It consists of a core antenna complex that captures photons, and an electron transfer chain that converts photonic excitation into a charge separation. In Euglena mutabilis, this protein is Photosystem II reaction center protein K.